We begin with the raw amino-acid sequence, 400 residues long: Phosphoglycerate kinase (400 aa).

Substrate is bound by residues 23 to 25 (DLN), Arg38, 61 to 64 (HFGR), Arg120, and Arg153. ATP-binding positions include Lys203, Glu325, and 355–358 (GGDT).

Belongs to the phosphoglycerate kinase family. As to quaternary structure, monomer.

It is found in the cytoplasm. It carries out the reaction (2R)-3-phosphoglycerate + ATP = (2R)-3-phospho-glyceroyl phosphate + ADP. Its pathway is carbohydrate degradation; glycolysis; pyruvate from D-glyceraldehyde 3-phosphate: step 2/5. The protein is Phosphoglycerate kinase of Methylobacterium radiotolerans (strain ATCC 27329 / DSM 1819 / JCM 2831 / NBRC 15690 / NCIMB 10815 / 0-1).